We begin with the raw amino-acid sequence, 304 residues long: Protein ML (304 aa).

Its function is as follows. Blocks host IRF3 and IRF7, thereby inhibiting IFN-beta expression and activation of host antiviral state. This Thogoto virus (isolate SiAr 126) (Tho) protein is Protein ML.